The following is a 531-amino-acid chain: Peroxinectin A (531 aa).

A signal peptide spans 1–21 (MRLNLISFFIIFTILVSISNS). An N-linked (GlcNAc...) asparagine glycan is attached at Asn62. Catalysis depends on His101, which acts as the Proton acceptor. Residues Asn131 and Asn338 are each glycosylated (N-linked (GlcNAc...) asparagine).

It belongs to the peroxidase family.

It is found in the secreted. It catalyses the reaction 2 a phenolic donor + H2O2 = 2 a phenolic radical donor + 2 H2O. This chain is Peroxinectin A (poxA), found in Dictyostelium discoideum (Social amoeba).